Here is a 202-residue protein sequence, read N- to C-terminus: MAENNNNNGDNMNNDNHQQPPSYSQLPPMASSNPQLRNYWIEQMETVSDFKNRQLPLARIKKIMKADPDVHMVSAEAPIIFAKACEMFIVDLTMRSWLKAEENKRHTLQKSDISNAVASSFTYDFLLDVVPKDESIATADPGFVAMPHPDGGGVPQYYYPPGVVMGTPMVGSGMYAPSQAWPAAAGDGEDDAEDNGGNGGGN.

The span at M1–N16 shows a compositional bias: low complexity. 2 disordered regions span residues M1–M29 and A180–N202. Residues H17–M29 show a composition bias toward polar residues.

The protein belongs to the NFYC/HAP5 subunit family. In terms of assembly, heterotrimeric transcription factor composed of three components, NF-YA, NF-YB and NF-YC. NF-YB and NF-YC must interact and dimerize for NF-YA association and DNA binding. Expressed in flowers and siliques.

The protein localises to the nucleus. Functionally, stimulates the transcription of various genes by recognizing and binding to a CCAAT motif in promoters. This is Nuclear transcription factor Y subunit C-6 (NFYC6) from Arabidopsis thaliana (Mouse-ear cress).